A 108-amino-acid chain; its full sequence is Ig kappa chain V-V region MOPC 149 (108 aa).

The interval 1–23 is framework-1; that stretch reads DIQMTQSPDYLSASVGETVTITC. Cys-23 and Cys-88 are disulfide-bonded. The complementarity-determining-1 stretch occupies residues 24 to 34; that stretch reads RASENIYSYLA. Residues 35–49 are framework-2; the sequence is WYQQKQGKSPQLLVY. Residues 50-56 are complementarity-determining-2; the sequence is DAKTLVE. The framework-3 stretch occupies residues 57 to 88; the sequence is GVPSRFSGSGSGTQFSLKINSLQPEDFGSYYC. The complementarity-determining-3 stretch occupies residues 89–97; sequence QHHYGIPFT. Residues 98-108 are framework-4; sequence FGSGTKLEIKR.

This chain is Ig kappa chain V-V region MOPC 149, found in Mus musculus (Mouse).